The sequence spans 448 residues: Phosphoglucosamine mutase (448 aa).

Ser-101 acts as the Phosphoserine intermediate in catalysis. Mg(2+) contacts are provided by Ser-101, Asp-242, Asp-244, and Asp-246. The residue at position 101 (Ser-101) is a Phosphoserine.

Belongs to the phosphohexose mutase family. Requires Mg(2+) as cofactor. Activated by phosphorylation.

The enzyme catalyses alpha-D-glucosamine 1-phosphate = D-glucosamine 6-phosphate. In terms of biological role, catalyzes the conversion of glucosamine-6-phosphate to glucosamine-1-phosphate. The chain is Phosphoglucosamine mutase from Afipia carboxidovorans (strain ATCC 49405 / DSM 1227 / KCTC 32145 / OM5) (Oligotropha carboxidovorans).